Consider the following 340-residue polypeptide: MILSIESSCDDSSLALTRIEDAKLIAHFKISQEKHHSSYGGVVPEIASRLHAENLPLLLERVKISLNKDFSKIKAIAITNQPGLSVTLIEGLMMAKALSLSLNLPLILEDHLRGHVYSLFINEKQTRMPLSVLLVSGGHSLILEARDYEDIKIVATSLDDSFGESFDKVSKMLDLGYPGGPIVEKLALDYAHPNEPLMFPIPLKNSPNLAFSFSGLKNAVRLEVEKNAHNLNDEVKQKIGYHFQSAAIEHLIQQTKRYFKIKRPKIFGIVGGASQNLALRKAFEDLCAEFDCELVLAPLEFCSDNAAMIGRSSLEAYQKKRFIPLEKADISPRTLLKNFE.

Residues H111 and H115 each coordinate Fe cation. Substrate is bound by residues 134–138, D167, G180, and N276; that span reads LVSGG. D304 is a binding site for Fe cation.

The protein belongs to the KAE1 / TsaD family. Fe(2+) serves as cofactor.

The protein localises to the cytoplasm. It catalyses the reaction L-threonylcarbamoyladenylate + adenosine(37) in tRNA = N(6)-L-threonylcarbamoyladenosine(37) in tRNA + AMP + H(+). Required for the formation of a threonylcarbamoyl group on adenosine at position 37 (t(6)A37) in tRNAs that read codons beginning with adenine. Is involved in the transfer of the threonylcarbamoyl moiety of threonylcarbamoyl-AMP (TC-AMP) to the N6 group of A37, together with TsaE and TsaB. TsaD likely plays a direct catalytic role in this reaction. The sequence is that of tRNA N6-adenosine threonylcarbamoyltransferase from Helicobacter pylori (strain J99 / ATCC 700824) (Campylobacter pylori J99).